We begin with the raw amino-acid sequence, 354 residues long: Sorbitol dehydrogenase (354 aa).

Cys-43 is a binding site for Zn(2+). Tyr-49 lines the substrate pocket. Residues His-67 and Glu-68 each coordinate Zn(2+). Position 153 (Glu-153) interacts with substrate. Ile-181, Asp-201, and Arg-206 together coordinate NAD(+). Residues Ser-208 and Ser-222 each carry the phosphoserine modification. NAD(+) is bound by residues 270 to 272 (VGL) and 294 to 296 (VFR). Substrate-binding residues include Arg-296 and Tyr-297.

It belongs to the zinc-containing alcohol dehydrogenase family. In terms of assembly, homotetramer. Zn(2+) serves as cofactor. As to expression, expressed in liver.

The protein localises to the mitochondrion membrane. It is found in the cell projection. Its subcellular location is the cilium. It localises to the flagellum. It catalyses the reaction xylitol + NAD(+) = D-xylulose + NADH + H(+). It carries out the reaction L-iditol + NAD(+) = keto-L-sorbose + NADH + H(+). The enzyme catalyses keto-D-fructose + NADH + H(+) = D-sorbitol + NAD(+). Polyol dehydrogenase that catalyzes the reversible NAD(+)-dependent oxidation of various sugar alcohols. Is mostly active with xylitol, L-iditol and D-sorbitol (D-glucitol) as substrates, leading to the C2-oxidized products D-xylulose, L-sorbose and D-fructose, respectively. Is a key enzyme in the polyol pathway that interconverts glucose and fructose via sorbitol, which constitutes an important alternate route for glucose metabolism. May play a role in sperm motility by using sorbitol as an alternative energy source for sperm motility. The polypeptide is Sorbitol dehydrogenase (SORD) (Ovis aries (Sheep)).